The chain runs to 166 residues: Large ribosomal subunit protein uL10 (166 aa).

Belongs to the universal ribosomal protein uL10 family. As to quaternary structure, part of the ribosomal stalk of the 50S ribosomal subunit. The N-terminus interacts with L11 and the large rRNA to form the base of the stalk. The C-terminus forms an elongated spine to which L12 dimers bind in a sequential fashion forming a multimeric L10(L12)X complex.

Functionally, forms part of the ribosomal stalk, playing a central role in the interaction of the ribosome with GTP-bound translation factors. The protein is Large ribosomal subunit protein uL10 of Aeromonas hydrophila subsp. hydrophila (strain ATCC 7966 / DSM 30187 / BCRC 13018 / CCUG 14551 / JCM 1027 / KCTC 2358 / NCIMB 9240 / NCTC 8049).